Reading from the N-terminus, the 312-residue chain is Ribosomal protein L11 methyltransferase (312 aa).

Residues Thr162, Gly183, Asp205, and Asn248 each coordinate S-adenosyl-L-methionine.

This sequence belongs to the methyltransferase superfamily. PrmA family.

Its subcellular location is the cytoplasm. The catalysed reaction is L-lysyl-[protein] + 3 S-adenosyl-L-methionine = N(6),N(6),N(6)-trimethyl-L-lysyl-[protein] + 3 S-adenosyl-L-homocysteine + 3 H(+). Its function is as follows. Methylates ribosomal protein L11. This Anoxybacillus flavithermus (strain DSM 21510 / WK1) protein is Ribosomal protein L11 methyltransferase.